Consider the following 194-residue polypeptide: Large ribosomal subunit protein eL15 (194 aa).

A disordered region spans residues 165-194; that stretch reads AGKKGRGLMNKGKGAEKVRPGIRANKKLGK.

It belongs to the eukaryotic ribosomal protein eL15 family.

This Methanococcus aeolicus (strain ATCC BAA-1280 / DSM 17508 / OCM 812 / Nankai-3) protein is Large ribosomal subunit protein eL15.